We begin with the raw amino-acid sequence, 897 residues long: Molybdenum import ATP-binding protein ModC 2 (897 aa).

One can recognise an ABC transporter domain in the interval R6–D236. Residue G38 to T45 participates in ATP binding. Positions E295–S365 constitute a Mop domain. The tract at residues L823–E848 is disordered. Over residues R832 to E848 the composition is skewed to basic and acidic residues.

It belongs to the ABC transporter superfamily. Molybdate importer (TC 3.A.1.8) family. In terms of assembly, the complex is composed of two ATP-binding proteins (ModC), two transmembrane proteins (ModB) and a solute-binding protein (ModA).

It is found in the cell inner membrane. It catalyses the reaction molybdate(out) + ATP + H2O = molybdate(in) + ADP + phosphate + H(+). Its function is as follows. Part of the ABC transporter complex ModABC involved in molybdenum import. Responsible for energy coupling to the transport system. The polypeptide is Molybdenum import ATP-binding protein ModC 2 (Bradyrhizobium diazoefficiens (strain JCM 10833 / BCRC 13528 / IAM 13628 / NBRC 14792 / USDA 110)).